The following is a 233-amino-acid chain: Orotidine 5'-phosphate decarboxylase (233 aa).

Residues Asp-12, Lys-34, 61–70, Thr-116, Arg-181, Gln-190, Gly-210, and Arg-211 each bind substrate; that span reads DWKLHDIGAT. The active-site Proton donor is the Lys-63.

Belongs to the OMP decarboxylase family. Type 1 subfamily. As to quaternary structure, homodimer.

The catalysed reaction is orotidine 5'-phosphate + H(+) = UMP + CO2. It functions in the pathway pyrimidine metabolism; UMP biosynthesis via de novo pathway; UMP from orotate: step 2/2. Its function is as follows. Catalyzes the decarboxylation of orotidine 5'-monophosphate (OMP) to uridine 5'-monophosphate (UMP). The sequence is that of Orotidine 5'-phosphate decarboxylase from Caulobacter vibrioides (strain ATCC 19089 / CIP 103742 / CB 15) (Caulobacter crescentus).